A 926-amino-acid chain; its full sequence is Storkhead-box protein 2 (926 aa).

7 disordered regions span residues 1 to 32, 338 to 391, 452 to 529, 564 to 588, 632 to 672, 724 to 803, and 825 to 926; these read MKKTRSTTLRRAWPSSDFSDRASDRMRSRSEK, EEEK…HLDI, EMPF…SYID, KEPSSACSLLEPGKPPESLPSYGEL, GVKK…GGVA, LKSH…GTMQ, and LAPK…VTSV. Positions 18–32 are enriched in basic and acidic residues; the sequence is FSDRASDRMRSRSEK. Over residues 353-378 the composition is skewed to basic residues; sequence HSGRSKKSRTHRKSHGKSRSHSKTRV. The span at 379–391 shows a compositional bias: basic and acidic residues; the sequence is SKGDPSDGSHLDI. Basic residues predominate over residues 463–472; sequence SHSKVHRSHS. Residues 473 to 495 are compositionally biased toward basic and acidic residues; it reads HTQDRRSRNERSNKAKERSRSMD. The segment covering 518 to 529 has biased composition (polar residues); that stretch reads QDDQTPSQSYID. A compositionally biased stretch (basic and acidic residues) spans 632 to 658; sequence GVKKLSPSDRQVPHSSREPVGHKEESP. The span at 746–769 shows a compositional bias: polar residues; it reads LGTSAAQAMPASQRQQESGGNQEA. Basic and acidic residues predominate over residues 785–799; that stretch reads GANKNTEEEKNREDV. Composition is skewed to polar residues over residues 847–884 and 914–926; these read MDSSSITVDSGFNSPRTRESLASNTSSIVESNRRQNPA and KPSNCLQASVTSV.

This chain is Storkhead-box protein 2 (STOX2), found in Homo sapiens (Human).